Reading from the N-terminus, the 76-residue chain is Alpha/kappa-conotoxin pl14a (76 aa).

A signal peptide spans 1-24 (MPSVRSVTCCCLLWMMFSVQLVTP). Residues 25-39 (GSPGTAQLSGHRTAR) constitute a propeptide that is removed on maturation. Intrachain disulfides connect Cys-46–Cys-61 and Cys-50–Cys-63. Arg-64 bears the Arginine amide mark. A propeptide spanning residues 65 to 76 (GKRDAVSSSMAV) is cleaved from the precursor.

This sequence belongs to the conotoxin J superfamily. As to expression, expressed by the venom duct.

It is found in the secreted. Functionally, highly inhibits both nicotinic acetylcholine receptors (neuronal (IC(50)=8.7 uM for alpha-3/beta-4) and muscular (IC(50)=0.54 uM for alpha-1-beta-1-epsilon-delta (CHRNA1-CHRNB1-CHRND-CHRNE)) subtypes) and the voltage-gated potassium channel Kv1.6/KCNA6 subtype (IC(50)=1.59 uM). The protein is Alpha/kappa-conotoxin pl14a of Conus planorbis (Planorbis cone).